Consider the following 638-residue polypeptide: 1-deoxy-D-xylulose-5-phosphate synthase (638 aa).

Residues His-76 and 117-119 (AHS) contribute to the thiamine diphosphate site. Mg(2+) is bound at residue Asp-148. Residues 149–150 (GS), Asn-177, Tyr-287, and Glu-369 contribute to the thiamine diphosphate site. Asn-177 contacts Mg(2+).

The protein belongs to the transketolase family. DXPS subfamily. As to quaternary structure, homodimer. Requires Mg(2+) as cofactor. Thiamine diphosphate serves as cofactor.

It carries out the reaction D-glyceraldehyde 3-phosphate + pyruvate + H(+) = 1-deoxy-D-xylulose 5-phosphate + CO2. It functions in the pathway metabolic intermediate biosynthesis; 1-deoxy-D-xylulose 5-phosphate biosynthesis; 1-deoxy-D-xylulose 5-phosphate from D-glyceraldehyde 3-phosphate and pyruvate: step 1/1. Its function is as follows. Catalyzes the acyloin condensation reaction between C atoms 2 and 3 of pyruvate and glyceraldehyde 3-phosphate to yield 1-deoxy-D-xylulose-5-phosphate (DXP). This chain is 1-deoxy-D-xylulose-5-phosphate synthase, found in Rhodopseudomonas palustris (strain HaA2).